A 335-amino-acid chain; its full sequence is DNA-directed RNA polymerase subunit alpha (335 aa).

Residues Met-1–Glu-233 are alpha N-terminal domain (alpha-NTD). The interval Phe-249 to Glu-335 is alpha C-terminal domain (alpha-CTD).

Belongs to the RNA polymerase alpha chain family. Homodimer. The RNAP catalytic core consists of 2 alpha, 1 beta, 1 beta' and 1 omega subunit. When a sigma factor is associated with the core the holoenzyme is formed, which can initiate transcription.

The enzyme catalyses RNA(n) + a ribonucleoside 5'-triphosphate = RNA(n+1) + diphosphate. Functionally, DNA-dependent RNA polymerase catalyzes the transcription of DNA into RNA using the four ribonucleoside triphosphates as substrates. In Syntrophobacter fumaroxidans (strain DSM 10017 / MPOB), this protein is DNA-directed RNA polymerase subunit alpha.